Here is a 259-residue protein sequence, read N- to C-terminus: Glutamate racemase (259 aa).

Substrate is bound by residues 9–10 (DS) and 41–42 (YG). The active-site Proton donor/acceptor is the Cys-73. 74 to 75 (NT) provides a ligand contact to substrate. The Proton donor/acceptor role is filled by Cys-183. 184–185 (TH) provides a ligand contact to substrate.

It belongs to the aspartate/glutamate racemases family.

It catalyses the reaction L-glutamate = D-glutamate. The protein operates within cell wall biogenesis; peptidoglycan biosynthesis. In terms of biological role, provides the (R)-glutamate required for cell wall biosynthesis. The sequence is that of Glutamate racemase from Shewanella frigidimarina (strain NCIMB 400).